A 474-amino-acid polypeptide reads, in one-letter code: Cysteine protease ATG4A (474 aa).

Positions 1–32 (MTSLPGRGVSPSSSDPLCEGNAAPSSSSSSGQ) are disordered. Cysteine 161 acts as the Nucleophile in catalysis. Residues aspartate 358 and histidine 360 contribute to the active site. Residues 439–449 (KQMYNEESSSG) are compositionally biased toward polar residues. Residues 439–474 (KQMYNEESSSGDGMDSINVEGLDGSGETGEEEWQIL) form a disordered region.

It belongs to the peptidase C54 family. As to quaternary structure, interacts with ATG8.

The protein localises to the cytoplasm. The enzyme catalyses [protein]-C-terminal L-amino acid-glycyl-phosphatidylethanolamide + H2O = [protein]-C-terminal L-amino acid-glycine + a 1,2-diacyl-sn-glycero-3-phosphoethanolamine. Cysteine protease that plays a key role in autophagy by mediating both proteolytic activation and delipidation of ATG8 family proteins. The protease activity is required for proteolytic activation of ATG8 family proteins: cleaves the C-terminal amino acid of ATG8 proteins to reveal a C-terminal glycine. Exposure of the glycine at the C-terminus is essential for ATG8 proteins conjugation to phosphatidylethanolamine (PE) and insertion to membranes, which is necessary for autophagy. In addition to the protease activity, also mediates delipidation of PE-conjugated ATG8 proteins. This chain is Cysteine protease ATG4A (ATG4A), found in Oryza sativa subsp. japonica (Rice).